Here is a 179-residue protein sequence, read N- to C-terminus: MQEYLEKRYALALYEIAEKNNKVDEYLRDLTDICDIFDENKEFYEVINHPKINTAKKKQLFTDLFKGKIDEELLSFMMILIEKDRILQLREILDQMEKIDLERRNTIRGIVKTVVPLLDEELEQLKAIFEKKYEKNILFDTKIDKSLLGGVYVKVGNDIIDGTIKSKVEEMKELMLKKE.

Belongs to the ATPase delta chain family. F-type ATPases have 2 components, F(1) - the catalytic core - and F(0) - the membrane proton channel. F(1) has five subunits: alpha(3), beta(3), gamma(1), delta(1), epsilon(1). F(0) has three main subunits: a(1), b(2) and c(10-14). The alpha and beta chains form an alternating ring which encloses part of the gamma chain. F(1) is attached to F(0) by a central stalk formed by the gamma and epsilon chains, while a peripheral stalk is formed by the delta and b chains.

The protein resides in the cell membrane. In terms of biological role, f(1)F(0) ATP synthase produces ATP from ADP in the presence of a proton or sodium gradient. F-type ATPases consist of two structural domains, F(1) containing the extramembraneous catalytic core and F(0) containing the membrane proton channel, linked together by a central stalk and a peripheral stalk. During catalysis, ATP synthesis in the catalytic domain of F(1) is coupled via a rotary mechanism of the central stalk subunits to proton translocation. Functionally, this protein is part of the stalk that links CF(0) to CF(1). It either transmits conformational changes from CF(0) to CF(1) or is implicated in proton conduction. This is ATP synthase subunit delta from Clostridium beijerinckii (strain ATCC 51743 / NCIMB 8052) (Clostridium acetobutylicum).